The primary structure comprises 687 residues: Phage-like element PBSX protein XkdV (687 aa).

The protein to B.subtilis YqcC.

The polypeptide is Phage-like element PBSX protein XkdV (xkdV) (Bacillus subtilis (strain 168)).